Here is a 344-residue protein sequence, read N- to C-terminus: Dihydroorotase (344 aa).

Zn(2+) is bound by residues His-13 and His-15. Substrate is bound by residues 15–17 (HLR) and Asn-41. The Zn(2+) site is built by Lys-99, His-136, and His-174. Lys-99 bears the N6-carboxylysine mark. His-136 contacts substrate. Leu-219 provides a ligand contact to substrate. Position 247 (Asp-247) interacts with Zn(2+). The active site involves Asp-247. Residues His-251 and Ala-263 each coordinate substrate.

Belongs to the metallo-dependent hydrolases superfamily. DHOase family. Class II DHOase subfamily. Homodimer. The cofactor is Zn(2+).

It catalyses the reaction (S)-dihydroorotate + H2O = N-carbamoyl-L-aspartate + H(+). Its pathway is pyrimidine metabolism; UMP biosynthesis via de novo pathway; (S)-dihydroorotate from bicarbonate: step 3/3. Functionally, catalyzes the reversible cyclization of carbamoyl aspartate to dihydroorotate. This chain is Dihydroorotase, found in Acinetobacter baumannii (strain SDF).